Reading from the N-terminus, the 113-residue chain is UPF0102 protein SUN_0231 (113 aa).

Belongs to the UPF0102 family.

This Sulfurovum sp. (strain NBC37-1) protein is UPF0102 protein SUN_0231.